A 93-amino-acid chain; its full sequence is Auxin-induced protein 10A5 (93 aa).

It belongs to the ARG7 family.

In Glycine max (Soybean), this protein is Auxin-induced protein 10A5.